A 335-amino-acid chain; its full sequence is Probable magnesium transporter NIPA1 (335 aa).

Residues 1–7 (MDQMSPD) are Extracellular-facing. The helical transmembrane segment at 8–28 (NINGVILAVSSSIFIGSSFII) threads the bilayer. The Cytoplasmic segment spans residues 29–55 (KKKGLKKAGASGVRAGEGGYGYLKEPW). A helical membrane pass occupies residues 56 to 76 (WWAGMITMIVGEVANFAAYAF). Over 77-79 (APA) the chain is Extracellular. A helical membrane pass occupies residues 80–100 (ILVTPLGALSIIFSAVLAHFI). Over 101–104 (LKEK) the chain is Cytoplasmic. Residues 105 to 125 (LHMFGILGCILCVVGSTTIVL) form a helical membrane-spanning segment. Residues 126–143 (HAPHEQKIESVKQIWQLA) lie on the Extracellular side of the membrane. A helical transmembrane segment spans residues 144–164 (IEPGFLVYSAVIVIVVAILIF). Over 165-179 (YYEPRYGKTHMIVYV) the chain is Cytoplasmic. Residues 180–200 (GICSLMGSLTVMSVKAVAIAI) traverse the membrane as a helical segment. The Extracellular portion of the chain corresponds to 201–212 (KLTFSGTNQFKY). A helical transmembrane segment spans residues 213–233 (FNTWIFILVVATCCILQINYL). Over 234–244 (NKALDTFNTAV) the chain is Cytoplasmic. A helical membrane pass occupies residues 245 to 265 (ISPVYYVMFTTFTIIASMIMF). The Extracellular segment spans residues 266-272 (KDWASQS). Residues 273–293 (GLKIATELCGFVTILSGTFLL) traverse the membrane as a helical segment. Over 294–335 (HKTKDMGNSASGRGSISMPTRDTPVFTNSGSGRSSSSDKVAS) the chain is Cytoplasmic. The segment covering 303 to 321 (ASGRGSISMPTRDTPVFTN) has biased composition (polar residues). The segment at 303–335 (ASGRGSISMPTRDTPVFTNSGSGRSSSSDKVAS) is disordered. Positions 322–335 (SGSGRSSSSDKVAS) are enriched in low complexity.

Belongs to the NIPA (TC 2.A.7) family. Homodimer.

The protein resides in the cell membrane. Its subcellular location is the early endosome. Acts as a Mg(2+) transporter. Can also transport other divalent cations such as Fe(2+), Sr(2+), Ba(2+), Mn(2+) and Co(2+) but to a much less extent than Mg(2+). The chain is Probable magnesium transporter NIPA1 from Arabidopsis thaliana (Mouse-ear cress).